The following is a 153-amino-acid chain: UPF0179 protein AF_2154 (153 aa).

The protein belongs to the UPF0179 family.

The sequence is that of UPF0179 protein AF_2154 from Archaeoglobus fulgidus (strain ATCC 49558 / DSM 4304 / JCM 9628 / NBRC 100126 / VC-16).